Here is a 249-residue protein sequence, read N- to C-terminus: 1-(5-phosphoribosyl)-5-[(5-phosphoribosylamino)methylideneamino] imidazole-4-carboxamide isomerase (249 aa).

Asp8 serves as the catalytic Proton acceptor. The active-site Proton donor is Asp129.

Belongs to the HisA/HisF family.

Its subcellular location is the cytoplasm. It carries out the reaction 1-(5-phospho-beta-D-ribosyl)-5-[(5-phospho-beta-D-ribosylamino)methylideneamino]imidazole-4-carboxamide = 5-[(5-phospho-1-deoxy-D-ribulos-1-ylimino)methylamino]-1-(5-phospho-beta-D-ribosyl)imidazole-4-carboxamide. It functions in the pathway amino-acid biosynthesis; L-histidine biosynthesis; L-histidine from 5-phospho-alpha-D-ribose 1-diphosphate: step 4/9. This Nitratidesulfovibrio vulgaris (strain ATCC 29579 / DSM 644 / CCUG 34227 / NCIMB 8303 / VKM B-1760 / Hildenborough) (Desulfovibrio vulgaris) protein is 1-(5-phosphoribosyl)-5-[(5-phosphoribosylamino)methylideneamino] imidazole-4-carboxamide isomerase.